The sequence spans 947 residues: Protein translocase subunit SecA 1 (947 aa).

ATP-binding positions include Gln83, 101 to 105, and Asp490; that span reads GEGKT. Positions 860–947 are disordered; sequence AKAQEQTGQG…KTSKPTRRRG (88 aa). Positions 925–934 are enriched in basic and acidic residues; the sequence is TRRERREAAR. Residues 935-947 are compositionally biased toward basic residues; it reads KQAKTSKPTRRRG.

It belongs to the SecA family. In terms of assembly, monomer and homodimer. Part of the essential Sec protein translocation apparatus which comprises SecA, SecYEG and auxiliary proteins SecDF. Other proteins may also be involved.

Its subcellular location is the cell membrane. The protein resides in the cytoplasm. It carries out the reaction ATP + H2O + cellular proteinSide 1 = ADP + phosphate + cellular proteinSide 2.. Part of the Sec protein translocase complex. Interacts with the SecYEG preprotein conducting channel. Has a central role in coupling the hydrolysis of ATP to the transfer of proteins into and across the cell membrane, serving as an ATP-driven molecular motor driving the stepwise translocation of polypeptide chains across the membrane. This Mycobacterium sp. (strain KMS) protein is Protein translocase subunit SecA 1.